The primary structure comprises 234 residues: Isoprenyl transferase (234 aa).

D13 is an active-site residue. D13 contributes to the Mg(2+) binding site. Residues 14-17 (GNGR), W18, R26, H30, and 58-60 (STE) each bind substrate. Residue N61 is the Proton acceptor of the active site. Substrate is bound by residues W62, R64, R180, and 186 to 188 (RLS). Position 199 (E199) interacts with Mg(2+).

It belongs to the UPP synthase family. As to quaternary structure, homodimer. Mg(2+) serves as cofactor.

Its function is as follows. Catalyzes the condensation of isopentenyl diphosphate (IPP) with allylic pyrophosphates generating different type of terpenoids. This chain is Isoprenyl transferase (uppS), found in Helicobacter pylori (strain ATCC 700392 / 26695) (Campylobacter pylori).